We begin with the raw amino-acid sequence, 395 residues long: MRKKLTALVLSALPLAAVADVSLYGEIKAGVEGRNYQLQLTEAQAANGGASGQVKVTKVTKAKSRIRTKISDFGSFIGFKGSEDLGEGLKAVWQLEQDVSVAGGGATQWGNRESFIGLAGEFGTLRAGRVANQFDDASQAIDPWDSNNDVASQLGIFKRHDDMPVSVRYDSPEFSGFSGSVQFVPAQNSKSAYKPAYWTTVNTGSATTTTFVPAVVGKPGSDVYYAGLNYKNGGFAGNYAFKYARHANVGRDAFELFLLGSGSDQAKGTDPLKNHQVHRLTGGYEEGGLNLALAAQLDLSENGDKTKNSTTEIAATASYRFGNAVPRISYAHGFDFIERGKKGENTSYDQIIAGVDYDFSKRTSAIVSGAWLKRNTGIGNYTQINAASVGLRHKF.

A signal peptide spans 1–19 (MRKKLTALVLSALPLAAVA).

The protein belongs to the Gram-negative porin family. As to quaternary structure, homotrimer.

Its subcellular location is the cell outer membrane. In terms of biological role, serves as a slightly cation selective porin. Major antigen on the gonococcal cell surface and it may have pathogenic properties in addition to its porin activity. This is Major outer membrane protein P.IA (porA) from Neisseria meningitidis serogroup A / serotype 4A (strain DSM 15465 / Z2491).